A 621-amino-acid chain; its full sequence is Bifunctional protein GlmU (621 aa).

Positions 1–229 (MAERDLAVAI…AREIVGINDR (229 aa)) are pyrophosphorylase. Residues 11-14 (LAAG), Lys-25, Gln-76, and 81-82 (GT) each bind UDP-N-acetyl-alpha-D-glucosamine. Residue Asp-106 coordinates Mg(2+). Gly-143, Glu-158, Asn-173, and Asn-227 together coordinate UDP-N-acetyl-alpha-D-glucosamine. Residue Asn-227 participates in Mg(2+) binding. The linker stretch occupies residues 230 to 250 (RQLAQAYQILQDRLKEAWMEA). The interval 251 to 621 (GVTFVDPDSV…TGVGIPSCPP (371 aa)) is N-acetyltransferase. UDP-N-acetyl-alpha-D-glucosamine-binding residues include Arg-332 and Lys-350. His-362 functions as the Proton acceptor in the catalytic mechanism. UDP-N-acetyl-alpha-D-glucosamine is bound by residues Tyr-365 and Asn-376. Acetyl-CoA-binding positions include Ala-379, 385–386 (NY), Ala-422, and Arg-441. The interval 601–621 (ATPPSPQRADGTGVGIPSCPP) is disordered.

It in the N-terminal section; belongs to the N-acetylglucosamine-1-phosphate uridyltransferase family. In the C-terminal section; belongs to the transferase hexapeptide repeat family. Homotrimer. Mg(2+) is required as a cofactor.

It localises to the cytoplasm. The enzyme catalyses alpha-D-glucosamine 1-phosphate + acetyl-CoA = N-acetyl-alpha-D-glucosamine 1-phosphate + CoA + H(+). It catalyses the reaction N-acetyl-alpha-D-glucosamine 1-phosphate + UTP + H(+) = UDP-N-acetyl-alpha-D-glucosamine + diphosphate. Its pathway is nucleotide-sugar biosynthesis; UDP-N-acetyl-alpha-D-glucosamine biosynthesis; N-acetyl-alpha-D-glucosamine 1-phosphate from alpha-D-glucosamine 6-phosphate (route II): step 2/2. It participates in nucleotide-sugar biosynthesis; UDP-N-acetyl-alpha-D-glucosamine biosynthesis; UDP-N-acetyl-alpha-D-glucosamine from N-acetyl-alpha-D-glucosamine 1-phosphate: step 1/1. The protein operates within bacterial outer membrane biogenesis; LPS lipid A biosynthesis. Functionally, catalyzes the last two sequential reactions in the de novo biosynthetic pathway for UDP-N-acetylglucosamine (UDP-GlcNAc). The C-terminal domain catalyzes the transfer of acetyl group from acetyl coenzyme A to glucosamine-1-phosphate (GlcN-1-P) to produce N-acetylglucosamine-1-phosphate (GlcNAc-1-P), which is converted into UDP-GlcNAc by the transfer of uridine 5-monophosphate (from uridine 5-triphosphate), a reaction catalyzed by the N-terminal domain. The sequence is that of Bifunctional protein GlmU from Synechococcus sp. (strain JA-3-3Ab) (Cyanobacteria bacterium Yellowstone A-Prime).